The following is a 183-amino-acid chain: MSDEEKKRRAATARRQHLKSAMLQLAVTEIEKEAAAKEVEKQNYLAEHCPPLSLPGSMQELQELCKKLHAKIDSVDEERYDTEVKLQKTNKELEDLSQKLFDLRGKFKRPPLRRVRMSADAMLRALLGSKHKVNMDLRANLKQVKKEDTEKEKDLRDVGDWRKNIEEKSGMEGRKKMFEAGES.

Serine 2 carries the post-translational modification N-acetylserine. The segment at 2–48 (SDEEKKRRAATARRQHLKSAMLQLAVTEIEKEAAAKEVEKQNYLAEH) is involved in binding TNC. Residues 97–117 (SQKLFDLRGKFKRPPLRRVRM) are involved in binding TNC and actin.

It belongs to the troponin I family. In terms of assembly, binds to actin and tropomyosin. Post-translationally, the N-terminus is blocked.

In terms of biological role, troponin I is the inhibitory subunit of troponin, the thin filament regulatory complex which confers calcium-sensitivity to striated muscle actomyosin ATPase activity. This is Troponin I, fast skeletal muscle (TNNI2) from Gallus gallus (Chicken).